Consider the following 496-residue polypeptide: Apolipoprotein N-acyltransferase (496 aa).

Helical transmembrane passes span 6 to 26, 50 to 70, 77 to 97, 114 to 134, 148 to 168, and 183 to 203; these read IICF…FFIP, FGYL…SIGV, FWWA…FFIS, LIFC…CTGL, ILIQ…VIYI, and LKIL…YGAM. A CN hydrolase domain is found at 220–464; sequence VQPSIPQTAK…QGLIPQKLTT (245 aa). E259 functions as the Proton acceptor in the catalytic mechanism. The active site involves K322. Residue C372 is the Nucleophile of the active site. A helical transmembrane segment spans residues 474-494; sequence FAMLLPIVFILLIHYLLSLIF.

This sequence belongs to the CN hydrolase family. Apolipoprotein N-acyltransferase subfamily.

The protein localises to the cell inner membrane. It carries out the reaction N-terminal S-1,2-diacyl-sn-glyceryl-L-cysteinyl-[lipoprotein] + a glycerophospholipid = N-acyl-S-1,2-diacyl-sn-glyceryl-L-cysteinyl-[lipoprotein] + a 2-acyl-sn-glycero-3-phospholipid + H(+). Its pathway is protein modification; lipoprotein biosynthesis (N-acyl transfer). Catalyzes the phospholipid dependent N-acylation of the N-terminal cysteine of apolipoprotein, the last step in lipoprotein maturation. The chain is Apolipoprotein N-acyltransferase from Rickettsia typhi (strain ATCC VR-144 / Wilmington).